The primary structure comprises 512 residues: Cytochrome P450 82C3 (512 aa).

The chain crosses the membrane as a helical span at residues 1–21 (MDTSLFSLFVSILVFVFIALF). A heme-binding site is contributed by Cys451.

It belongs to the cytochrome P450 family. Heme serves as cofactor.

Its subcellular location is the membrane. This chain is Cytochrome P450 82C3 (CYP82C3), found in Arabidopsis thaliana (Mouse-ear cress).